The sequence spans 323 residues: ADP-ribose glycohydrolase MACROD1 (323 aa).

N6-succinyllysine is present on residues K94, K101, and K127. K136 participates in a covalent cross-link: Glycyl lysine isopeptide (Lys-Gly) (interchain with G-Cter in SUMO2). The 182-residue stretch at D139–F320 folds into the Macro domain. G157–I159 provides a ligand contact to substrate. K161 carries the N6-acetyllysine modification. Residues A170 to N172, G177 to D182, I265 to G271, and F304 contribute to the substrate site.

Belongs to the MacroD-type family. MacroD1/2-like subfamily. In terms of assembly, interacts with ESR1; Interacts in a manner that is estrogen independent but is enhanced by estrogen. Interacts (via macro domain) with AR.

The protein localises to the nucleus. It carries out the reaction 3''-O-acetyl-ADP-D-ribose + H2O = ADP-D-ribose + acetate + H(+). The catalysed reaction is 2''-O-acetyl-ADP-D-ribose + H2O = ADP-D-ribose + acetate + H(+). It catalyses the reaction 4-O-(ADP-D-ribosyl)-L-aspartyl-[protein] + H2O = L-aspartyl-[protein] + ADP-D-ribose + H(+). The enzyme catalyses 5-O-(ADP-D-ribosyl)-L-glutamyl-[protein] + H2O = L-glutamyl-[protein] + ADP-D-ribose + H(+). It carries out the reaction alpha-NAD(+) + H2O = ADP-D-ribose + nicotinamide + H(+). Its activity is regulated as follows. Subject to competitive inhibition by the product ADP-ribose. Functionally, removes ADP-ribose from aspartate and glutamate residues in proteins bearing a single ADP-ribose moiety. Inactive towards proteins bearing poly-ADP-ribose. Deacetylates O-acetyl-ADP ribose, a signaling molecule generated by the deacetylation of acetylated lysine residues in histones and other proteins. Plays a role in estrogen signaling. Binds to androgen receptor (AR) and amplifies the transactivation function of AR in response to androgen. May play an important role in carcinogenesis and/or progression of hormone-dependent cancers by feed-forward mechanism that activates ESR1 transactivation. Could be an ESR1 coactivator, providing a positive feedback regulatory loop for ESR1 signal transduction. Could be involved in invasive growth by down-regulating CDH1 in endometrial cancer cells. Enhances ESR1-mediated transcription activity. This chain is ADP-ribose glycohydrolase MACROD1, found in Mus musculus (Mouse).